We begin with the raw amino-acid sequence, 1010 residues long: Trifunctional purine biosynthetic protein adenosine-3 (1010 aa).

A2 is subject to N-acetylalanine. Residue S10 is modified to Phosphoserine. Positions 111–318 (KEFMDRHEIP…LYEVMQSTLD (208 aa)) constitute an ATP-grasp domain. Residues 190-193 (EEFL), E197, R220, and N229 contribute to the ATP site. E288 and N290 together coordinate Mg(2+). An N6-acetyllysine modification is found at K350. Positions 434 to 809 (GLTYKDSGVD…NFPVQQKKAR (376 aa)) are AIRS domain. 2 positions are modified to phosphoserine: S440 and S467. T682 is modified (phosphothreonine). The segment at 810–1010 (VAVLISGTGS…DGKIHWAKEQ (201 aa)) is GART domain. 818 to 820 (GSN) contacts N(1)-(5-phospho-beta-D-ribosyl)glycinamide. (6R)-10-formyltetrahydrofolate-binding positions include R871, 896 to 899 (MRIL), and N913. Residue H915 is the Proton donor of the active site. Position 947–951 (947–951 (AEDVD)) interacts with (6R)-10-formyltetrahydrofolate. 977–980 (KVAE) contributes to the N(1)-(5-phospho-beta-D-ribosyl)glycinamide binding site.

This sequence in the N-terminal section; belongs to the GARS family. The protein in the central section; belongs to the AIR synthase family. It in the C-terminal section; belongs to the GART family. In terms of assembly, homodimer. The cofactor is Mg(2+). Requires Mn(2+) as cofactor. In terms of tissue distribution, detected in liver, kidney and brain.

It catalyses the reaction 5-phospho-beta-D-ribosylamine + glycine + ATP = N(1)-(5-phospho-beta-D-ribosyl)glycinamide + ADP + phosphate + H(+). It carries out the reaction 2-formamido-N(1)-(5-O-phospho-beta-D-ribosyl)acetamidine + ATP = 5-amino-1-(5-phospho-beta-D-ribosyl)imidazole + ADP + phosphate + H(+). The enzyme catalyses N(1)-(5-phospho-beta-D-ribosyl)glycinamide + (6R)-10-formyltetrahydrofolate = N(2)-formyl-N(1)-(5-phospho-beta-D-ribosyl)glycinamide + (6S)-5,6,7,8-tetrahydrofolate + H(+). Its pathway is purine metabolism; IMP biosynthesis via de novo pathway; 5-amino-1-(5-phospho-D-ribosyl)imidazole from N(2)-formyl-N(1)-(5-phospho-D-ribosyl)glycinamide: step 2/2. The protein operates within purine metabolism; IMP biosynthesis via de novo pathway; N(1)-(5-phospho-D-ribosyl)glycinamide from 5-phospho-alpha-D-ribose 1-diphosphate: step 2/2. It functions in the pathway purine metabolism; IMP biosynthesis via de novo pathway; N(2)-formyl-N(1)-(5-phospho-D-ribosyl)glycinamide from N(1)-(5-phospho-D-ribosyl)glycinamide (10-formyl THF route): step 1/1. Functionally, trifunctional enzyme that catalyzes three distinct reactions as part of the 'de novo' inosine monophosphate biosynthetic pathway. In Mus musculus (Mouse), this protein is Trifunctional purine biosynthetic protein adenosine-3 (Gart).